We begin with the raw amino-acid sequence, 626 residues long: Chaperone protein HtpG (626 aa).

Positions M1–R338 are a; substrate-binding. Positions E339–K553 are b. Positions L554 to N626 are c.

Belongs to the heat shock protein 90 family. As to quaternary structure, homodimer.

It is found in the cytoplasm. Molecular chaperone. Has ATPase activity. This is Chaperone protein HtpG from Buchnera aphidicola subsp. Baizongia pistaciae (strain Bp).